The following is a 37-amino-acid chain: Large ribosomal subunit protein bL36 (37 aa).

Belongs to the bacterial ribosomal protein bL36 family.

This chain is Large ribosomal subunit protein bL36, found in Idiomarina loihiensis (strain ATCC BAA-735 / DSM 15497 / L2-TR).